Consider the following 209-residue polypeptide: Transcription factor atf31 (209 aa).

The segment covering 90-103 has biased composition (polar residues); that stretch reads SKSPSIISEASHNS. Residues 90-133 form a disordered region; sequence SKSPSIISEASHNSPSRELDDSGDENTSKLTGTKQSMLKARNRQ. Residues 121 to 184 form the bZIP domain; that stretch reads GTKQSMLKAR…IKLRTLVFAH (64 aa). Residues 123–161 form a basic motif region; that stretch reads KQSMLKARNRQAAQKCRIKKKKYLQTLQDQVNYYTSENK. Residues 163–177 form a leucine-zipper region; the sequence is LLQSANDLREEIIKL.

The protein belongs to the bZIP family.

Its subcellular location is the nucleus. The polypeptide is Transcription factor atf31 (atf31) (Schizosaccharomyces pombe (strain 972 / ATCC 24843) (Fission yeast)).